We begin with the raw amino-acid sequence, 162 residues long: Probable ergosterol biosynthetic protein 28 homolog (162 aa).

4 helical membrane-spanning segments follow: residues Ala7–Ala25, Leu40–Phe60, Ile69–Tyr89, and Ile96–Leu116.

Belongs to the ERG28 family. In terms of tissue distribution, expressed in tissues including muscles, intestine and neurons.

It is found in the endoplasmic reticulum membrane. The protein localises to the cell projection. The protein resides in the dendrite. Functionally, promotes the translocation of slo-1 potassium ion channels from the endoplasmic reticulum to its final destination at the plasma membrane, probably by shielding from premature proteasomal degradation in the endoplasmic reticulum. Maintains the levels of slo-1 potassium ion channel at the presynaptic neurons. The protein is Probable ergosterol biosynthetic protein 28 homolog of Caenorhabditis elegans.